A 1321-amino-acid polypeptide reads, in one-letter code: Insulin receptor substrate 2 (1321 aa).

A compositionally biased stretch (pro residues) spans 1-10 (MASAPLPGPP). Disordered regions lie at residues 1 to 32 (MASAPLPGPPASAGGDGPNLNNNNNNNNHSVR) and 51 to 73 (RGPGTGGDEASAAGGSPPQPPRL). Residues 16-144 (DGPNLNNNNN…WYRALTDLVS (129 aa)) enclose the PH domain. Residues 18-28 (PNLNNNNNNNN) show a composition bias toward low complexity. Residues 191–295 (YREVWQVNLK…EAMKALKELF (105 aa)) enclose the IRS-type PTB domain. Residues 299–536 (PRSKSQSSGS…ARDGSGGELY (238 aa)) are disordered. S303 and S343 each carry phosphoserine. Position 347 is a phosphothreonine (T347). A Phosphoserine modification is found at S362. Residues 364-376 (GDGGAAGGAGTAG) show a composition bias toward gly residues. S381, S385, and S388 each carry phosphoserine. An Omega-N-methylarginine modification is found at R409. 2 stretches are compositionally biased toward low complexity: residues 435–456 (SPPAATSPGSLSSSSGHGSGSY) and 478–490 (PSSGSASASGSPS). T517 bears the Phosphothreonine mark. S520 carries the post-translational modification Phosphoserine. T524 is subject to Phosphothreonine. Y536 carries the phosphotyrosine; by INSR modification. A YXXM motif 1 motif is present at residues 536–539 (YGYM). Residue S556 is modified to Phosphoserine; by PLK1. S573 carries the post-translational modification Phosphoserine. Residues T575 and T576 each carry the phosphothreonine modification. S590 is modified (phosphoserine). Positions 594–597 (YTLM) match the YXXM motif 2 motif. S604 and S616 each carry phosphoserine. Y649 bears the Phosphotyrosine mark. 2 consecutive short sequence motifs (YXXM motif) follow at residues 649–652 (YMPM) and 671–674 (YMPM). Y671 is subject to Phosphotyrosine; by INSR. A phosphoserine mark is found at S675, S678, S727, and S728. Residues 734 to 737 (YMRM) carry the YXXM motif 5 motif. S762 carries the post-translational modification Phosphoserine. The residue at position 771 (T771) is a Phosphothreonine. At S796 the chain carries Phosphoserine. The YXXM motif 6 motif lies at 814–817 (YVLM). S819 is modified (phosphoserine). Disordered stretches follow at residues 834–871 (ATPGAGTFGAAGGSHTQPHHSAVPSSMRPSAIGGRPEG) and 888–1091 (EGLQ…ASPT). At S907 the chain carries Phosphoserine. A Phosphotyrosine; by INSR modification is found at Y911. Residues 930-959 (LLASAASSSSLLSASSPASSLGSGTPGTSS) are compositionally biased toward low complexity. At S965 the chain carries Phosphoserine. At Y970 the chain carries Phosphotyrosine; by INSR. Residues 1005 to 1014 (PYPPLPPRPS) show a composition bias toward pro residues. The segment covering 1039 to 1055 (AATSQGPTAGSSMSSEP) has biased composition (polar residues). A YXXM motif 7 motif is present at residues 1061 to 1064 (YTEM). T1071 is modified (phosphothreonine). Residues 1072–1082 (PPQPIVAPPKP) show a composition bias toward pro residues. The residue at position 1089 (S1089) is a Phosphoserine. S1098 bears the Phosphoserine; by PLK1 mark. Residues 1110–1198 (LQVSQPPDPH…TSPGQAQPLV (89 aa)) form a disordered region. The segment covering 1139 to 1154 (ETFSSTTTVTPVSPSF) has biased composition (low complexity). Phosphothreonine is present on T1148. Residues S1151, S1163, S1165, S1175, and S1190 each carry the phosphoserine modification. A compositionally biased stretch (polar residues) spans 1163–1179 (SASVENVSLRKSSEGSS). Y1242 bears the Phosphotyrosine; by INSR mark. The interval 1251–1275 (QGSLAQSQPQPGDKNSWSRTRSLGG) is disordered. The segment covering 1253–1271 (SLAQSQPQPGDKNSWSRTR) has biased composition (polar residues). Y1303 is modified (phosphotyrosine; by INSR). A Glycyl lysine isopeptide (Lys-Gly) (interchain with G-Cter in ubiquitin) cross-link involves residue K1314.

As to quaternary structure, interacts with PHIP. Interacts with SH2B1; this interaction enhances leptin-induced activation of the PI3-kinase pathway. Interacts with GRB2. Interacts with PIK3R1. Interacts with DVL2; this interaction promotes the Wnt/beta-catenin signaling pathway. Post-translationally, phosphorylation fluctuates in a cell-cycle dependent manner with hyperphosphorylation during mitosis. Phosphorylated at Ser-556 and Ser-1098 by PLK1; these phosphorylations prevent the activation of the PI3K pathway upon growth factor stimulation by inhibiting the binding between IRS2 and the PI3K pathway components and increasing the level of IRS2 protein degradation. In addition, they prevent premature mitotic exit. Monoubiquitinated by NEDD4; leading to enhanced IGF1 signaling. During cell cycle, ubiquitination and proteasomal degradation are controlled by FZR1. As to expression, skeletal muscle, lung, brain, liver, kidney, heart and spleen.

Its subcellular location is the cytoplasm. It localises to the cytosol. In terms of biological role, signaling adapter protein that participates in the signal transduction from two prominent receptor tyrosine kinases, insulin receptor/INSR and insulin-like growth factor I receptor/IGF1R. Plays therefore an important role in development, growth, glucose homeostasis as well as lipid metabolism. Upon phosphorylation by the insulin receptor, functions as a signaling scaffold that propagates insulin action through binding to SH2 domain-containing proteins including the p85 regulatory subunit of PI3K, NCK1, NCK2, GRB2 or SHP2. Recruitment of GRB2 leads to the activation of the guanine nucleotide exchange factor SOS1 which in turn triggers the Ras/Raf/MEK/MAPK signaling cascade. Activation of the PI3K/AKT pathway is responsible for most of insulin metabolic effects in the cell, and the Ras/Raf/MEK/MAPK is involved in the regulation of gene expression and in cooperation with the PI3K pathway regulates cell growth and differentiation. Acts a positive regulator of the Wnt/beta-catenin signaling pathway through suppression of DVL2 autophagy-mediated degradation leading to cell proliferation. Plays a role in cell cycle progression by promoting a robust spindle assembly checkpoint (SAC) during M-phase. In macrophages, IL4-induced tyrosine phosphorylation of IRS2 leads to the recruitment and activation of phosphoinositide 3-kinase (PI3K). The protein is Insulin receptor substrate 2 (Irs2) of Mus musculus (Mouse).